Consider the following 135-residue polypeptide: Putative pre-16S rRNA nuclease (135 aa).

The protein belongs to the YqgF nuclease family.

The protein localises to the cytoplasm. Functionally, could be a nuclease involved in processing of the 5'-end of pre-16S rRNA. The chain is Putative pre-16S rRNA nuclease from Buchnera aphidicola subsp. Acyrthosiphon pisum (strain 5A).